Reading from the N-terminus, the 165-residue chain is 6,7-dimethyl-8-ribityllumazine synthase (165 aa).

Residues Phe-24, 62–64 (AFE), and 86–88 (AVI) contribute to the 5-amino-6-(D-ribitylamino)uracil site. 91 to 92 (DT) lines the (2S)-2-hydroxy-3-oxobutyl phosphate pocket. Catalysis depends on His-94, which acts as the Proton donor. Phe-119 is a binding site for 5-amino-6-(D-ribitylamino)uracil. (2S)-2-hydroxy-3-oxobutyl phosphate is bound at residue Arg-133.

The protein belongs to the DMRL synthase family.

It catalyses the reaction (2S)-2-hydroxy-3-oxobutyl phosphate + 5-amino-6-(D-ribitylamino)uracil = 6,7-dimethyl-8-(1-D-ribityl)lumazine + phosphate + 2 H2O + H(+). Its pathway is cofactor biosynthesis; riboflavin biosynthesis; riboflavin from 2-hydroxy-3-oxobutyl phosphate and 5-amino-6-(D-ribitylamino)uracil: step 1/2. Catalyzes the formation of 6,7-dimethyl-8-ribityllumazine by condensation of 5-amino-6-(D-ribitylamino)uracil with 3,4-dihydroxy-2-butanone 4-phosphate. This is the penultimate step in the biosynthesis of riboflavin. The sequence is that of 6,7-dimethyl-8-ribityllumazine synthase from Prochlorococcus marinus (strain MIT 9303).